The sequence spans 60 residues: Conotoxin Cal6.30 (60 aa).

The N-terminal stretch at 1 to 22 is a signal peptide; that stretch reads MKVTCVLTLAVLILTIGQIANA. 3 disulfides stabilise this stretch: Cys31–Cys47, Cys38–Cys51, and Cys46–Cys55.

Expressed by the venom duct.

Its subcellular location is the secreted. Functionally, probable neurotoxin. This chain is Conotoxin Cal6.30, found in Californiconus californicus (California cone).